Reading from the N-terminus, the 152-residue chain is MSTFGELANEVVNNSYHKDLLRLSWGVLSDDMEGTGLMLMANLFNMSPESRLKFGRLGHLSTGRDNSKLRGHSITLMYALKNFVDALDDVDRLKCVVEKFAVNHINRQISAEEFGKIVGPFRAVLRIRMGDYFDEEIVAAWAALIAVVQAAL.

The Globin domain occupies 12-152; it reads VNNSYHKDLL…ALIAVVQAAL (141 aa). Residue His-104 coordinates heme b.

The protein belongs to the globin family.

This is Globin, minor from Anadara trapezia (Sydney cockle).